Reading from the N-terminus, the 463-residue chain is Probable ECA polymerase (463 aa).

Helical transmembrane passes span 6 to 26, 39 to 59, 65 to 85, 112 to 132, 154 to 174, 180 to 200, 201 to 221, 222 to 242, 340 to 360, 377 to 397, and 408 to 428; these read FGGL…LTWM, FSLL…VLVF, VVPV…YAVY, ANLT…IFFL, GVAL…VYFL, AWLL…VIVG, GTRA…IVRG, WITL…MFWL, LVVM…GLVI, YKAA…IVLT, and VVFF…LYWL.

Belongs to the WzyE family. As to quaternary structure, probably part of a complex composed of WzxE, WzyE and WzzE.

The protein localises to the cell inner membrane. The protein operates within bacterial outer membrane biogenesis; enterobacterial common antigen biosynthesis. Probably involved in the polymerization of enterobacterial common antigen (ECA) trisaccharide repeat units. This is Probable ECA polymerase from Pectobacterium atrosepticum (strain SCRI 1043 / ATCC BAA-672) (Erwinia carotovora subsp. atroseptica).